Here is a 252-residue protein sequence, read N- to C-terminus: Ribosomal RNA small subunit methyltransferase J (252 aa).

S-adenosyl-L-methionine is bound by residues 101–102 (RD), 117–118 (ER), 153–154 (SS), and Asp-171.

The protein belongs to the methyltransferase superfamily. RsmJ family.

It localises to the cytoplasm. It carries out the reaction guanosine(1516) in 16S rRNA + S-adenosyl-L-methionine = N(2)-methylguanosine(1516) in 16S rRNA + S-adenosyl-L-homocysteine + H(+). In terms of biological role, specifically methylates the guanosine in position 1516 of 16S rRNA. This chain is Ribosomal RNA small subunit methyltransferase J, found in Salmonella dublin (strain CT_02021853).